The chain runs to 378 residues: uncharacterized protein (378 aa).

Over residues 1-11 the composition is skewed to basic residues; that stretch reads MSPMNRQRKNK. The interval 1–23 is disordered; the sequence is MSPMNRQRKNKSNVLNEKDERPG.

This is an uncharacterized protein from Caenorhabditis elegans.